Reading from the N-terminus, the 263-residue chain is L-aspartate dehydrogenase (263 aa).

2 residues coordinate NAD(+): alanine 120 and asparagine 186. The active site involves histidine 216.

It belongs to the L-aspartate dehydrogenase family.

The catalysed reaction is L-aspartate + NADP(+) + H2O = oxaloacetate + NH4(+) + NADPH + H(+). The enzyme catalyses L-aspartate + NAD(+) + H2O = oxaloacetate + NH4(+) + NADH + H(+). It participates in cofactor biosynthesis; NAD(+) biosynthesis; iminoaspartate from L-aspartate (dehydrogenase route): step 1/1. Its function is as follows. Specifically catalyzes the NAD or NADP-dependent dehydrogenation of L-aspartate to iminoaspartate. The sequence is that of L-aspartate dehydrogenase from Acinetobacter baumannii (strain AB307-0294).